The sequence spans 261 residues: Cytochrome c oxidase subunit 3 (261 aa).

At 1–15 (MTHQAHAYHMVDPSP) the chain is on the mitochondrial matrix side. Residues 16-34 (WPLTGAVAALLMTSGLAVW) form a helical membrane-spanning segment. Over 35 to 40 (FHFHST) the chain is Mitochondrial intermembrane. A helical membrane pass occupies residues 41–66 (TLMALGTVLLLLTMYQWWRDIIREGT). Over 67-72 (FQGHHT) the chain is Mitochondrial matrix. A helical transmembrane segment spans residues 73–105 (PPVQKGLRYGMILFITSEVFFFLGFFWAFYHAS). Topologically, residues 106 to 128 (LAPTPELGGCWPPTGITTLDPFE) are mitochondrial intermembrane. A helical membrane pass occupies residues 129 to 152 (VPLLNTAVLLASGVTVTWAHHSIM). At 153-155 (EGE) the chain is on the mitochondrial matrix side. The helical transmembrane segment at 156–183 (RKQAIHSLTLTILLGFYFTFLQGLEYYD) threads the bilayer. The Mitochondrial intermembrane segment spans residues 184-190 (APFTIAD). Residues 191–223 (GVYGSTFFVATGFHGLHVIIGSTFLAVCLLRQI) form a helical membrane-spanning segment. The Mitochondrial matrix portion of the chain corresponds to 224-232 (RYHFTSEHH). The helical transmembrane segment at 233-256 (FGFEAAAWYWHFVDVVWLFLYISI) threads the bilayer. At 257–261 (YWWGS) the chain is on the mitochondrial intermembrane side.

The protein belongs to the cytochrome c oxidase subunit 3 family. In terms of assembly, component of the cytochrome c oxidase (complex IV, CIV), a multisubunit enzyme composed of 14 subunits. The complex is composed of a catalytic core of 3 subunits MT-CO1, MT-CO2 and MT-CO3, encoded in the mitochondrial DNA, and 11 supernumerary subunits COX4I, COX5A, COX5B, COX6A, COX6B, COX6C, COX7A, COX7B, COX7C, COX8 and NDUFA4, which are encoded in the nuclear genome. The complex exists as a monomer or a dimer and forms supercomplexes (SCs) in the inner mitochondrial membrane with NADH-ubiquinone oxidoreductase (complex I, CI) and ubiquinol-cytochrome c oxidoreductase (cytochrome b-c1 complex, complex III, CIII), resulting in different assemblies (supercomplex SCI(1)III(2)IV(1) and megacomplex MCI(2)III(2)IV(2)).

The protein localises to the mitochondrion inner membrane. It carries out the reaction 4 Fe(II)-[cytochrome c] + O2 + 8 H(+)(in) = 4 Fe(III)-[cytochrome c] + 2 H2O + 4 H(+)(out). Functionally, component of the cytochrome c oxidase, the last enzyme in the mitochondrial electron transport chain which drives oxidative phosphorylation. The respiratory chain contains 3 multisubunit complexes succinate dehydrogenase (complex II, CII), ubiquinol-cytochrome c oxidoreductase (cytochrome b-c1 complex, complex III, CIII) and cytochrome c oxidase (complex IV, CIV), that cooperate to transfer electrons derived from NADH and succinate to molecular oxygen, creating an electrochemical gradient over the inner membrane that drives transmembrane transport and the ATP synthase. Cytochrome c oxidase is the component of the respiratory chain that catalyzes the reduction of oxygen to water. Electrons originating from reduced cytochrome c in the intermembrane space (IMS) are transferred via the dinuclear copper A center (CU(A)) of subunit 2 and heme A of subunit 1 to the active site in subunit 1, a binuclear center (BNC) formed by heme A3 and copper B (CU(B)). The BNC reduces molecular oxygen to 2 water molecules using 4 electrons from cytochrome c in the IMS and 4 protons from the mitochondrial matrix. The protein is Cytochrome c oxidase subunit 3 (mt-co3) of Gadus morhua (Atlantic cod).